Consider the following 138-residue polypeptide: Sec-independent protein translocase protein TatB (138 aa).

Residues 1 to 21 form a helical membrane-spanning segment; the sequence is MFDIGATELLVIAIVAILVIG. Residues 74–138 are disordered; sequence MAKHPADQMQ…EPRLPLEGRD (65 aa). The span at 83–97 shows a compositional bias: low complexity; sequence QPLDAPDPALSAAEA. Residues 98 to 138 show a composition bias toward basic and acidic residues; that stretch reads RAAHTEAAKPARAAEETQADRASADEHPAASEPRLPLEGRD.

This sequence belongs to the TatB family. In terms of assembly, the Tat system comprises two distinct complexes: a TatABC complex, containing multiple copies of TatA, TatB and TatC subunits, and a separate TatA complex, containing only TatA subunits. Substrates initially bind to the TatABC complex, which probably triggers association of the separate TatA complex to form the active translocon.

It localises to the cell inner membrane. Its function is as follows. Part of the twin-arginine translocation (Tat) system that transports large folded proteins containing a characteristic twin-arginine motif in their signal peptide across membranes. Together with TatC, TatB is part of a receptor directly interacting with Tat signal peptides. TatB may form an oligomeric binding site that transiently accommodates folded Tat precursor proteins before their translocation. This chain is Sec-independent protein translocase protein TatB, found in Erythrobacter litoralis (strain HTCC2594).